The primary structure comprises 318 residues: Oncosphere antigen A (318 aa).

3 consecutive Fibronectin type-III domains span residues 6–103 (IPQN…TPLP), 109–207 (KPSF…ISRA), and 211–308 (VPQN…TPSV).

The chain is Oncosphere antigen A (ONCA) from Hydatigena taeniaeformis (Feline tapeworm).